The sequence spans 590 residues: Leishmanolysin (590 aa).

A signal peptide spans 1–39; the sequence is MSVDSSSTHRHRSVAARLVRLAAAGAAVIAAVGTAAAWA. A propeptide spans 40 to 87 (activation peptide); sequence HAGAVQHRCIHDAMQARVRQSVARHHTAPGAVSAVGLSYVTLGAAPTV. 2 disulfides stabilise this stretch: Cys112–Cys129 and Cys178–Cys217. Residue His251 participates in Zn(2+) binding. Glu252 is a catalytic residue. His255 is a binding site for Zn(2+). A glycan (N-linked (GlcNAc...) asparagine) is linked at Asn287. Cystine bridges form between Cys301/Cys373, Cys380/Cys443, Cys393/Cys412, Cys402/Cys477, Cys454/Cys498, Cys503/Cys553, and Cys523/Cys546. A Zn(2+)-binding site is contributed by His321. Asn565 carries the GPI-anchor amidated asparagine lipid modification. The propeptide at 566 to 590 is removed in mature form; that stretch reads AAAGRRGPRAAATALLVAALLAVAL.

It belongs to the peptidase M8 family. Requires Zn(2+) as cofactor.

Its subcellular location is the cell membrane. It catalyses the reaction Preference for hydrophobic residues at P1 and P1' and basic residues at P2' and P3'. A model nonapeptide is cleaved at -Ala-Tyr-|-Leu-Lys-Lys-.. Its function is as follows. Has an integral role during the infection of macrophages in the mammalian host. This chain is Leishmanolysin (gp63), found in Leishmania donovani.